A 414-amino-acid chain; its full sequence is Serine hydroxymethyltransferase (414 aa).

Residues Leu116 and 120–122 (GHL) contribute to the (6S)-5,6,7,8-tetrahydrofolate site. Lys224 carries the N6-(pyridoxal phosphate)lysine modification. (6S)-5,6,7,8-tetrahydrofolate is bound by residues Glu240 and 348-350 (SPF).

It belongs to the SHMT family. Homodimer. Requires pyridoxal 5'-phosphate as cofactor.

The protein resides in the cytoplasm. The catalysed reaction is (6R)-5,10-methylene-5,6,7,8-tetrahydrofolate + glycine + H2O = (6S)-5,6,7,8-tetrahydrofolate + L-serine. The protein operates within one-carbon metabolism; tetrahydrofolate interconversion. It participates in amino-acid biosynthesis; glycine biosynthesis; glycine from L-serine: step 1/1. Catalyzes the reversible interconversion of serine and glycine with tetrahydrofolate (THF) serving as the one-carbon carrier. This reaction serves as the major source of one-carbon groups required for the biosynthesis of purines, thymidylate, methionine, and other important biomolecules. Also exhibits THF-independent aldolase activity toward beta-hydroxyamino acids, producing glycine and aldehydes, via a retro-aldol mechanism. The chain is Serine hydroxymethyltransferase from Campylobacter jejuni subsp. jejuni serotype O:23/36 (strain 81-176).